We begin with the raw amino-acid sequence, 182 residues long: Putative pre-16S rRNA nuclease (182 aa).

Belongs to the YqgF nuclease family.

The protein localises to the cytoplasm. Its function is as follows. Could be a nuclease involved in processing of the 5'-end of pre-16S rRNA. In Corynebacterium glutamicum (strain ATCC 13032 / DSM 20300 / JCM 1318 / BCRC 11384 / CCUG 27702 / LMG 3730 / NBRC 12168 / NCIMB 10025 / NRRL B-2784 / 534), this protein is Putative pre-16S rRNA nuclease.